Consider the following 435-residue polypeptide: NADH-quinone oxidoreductase subunit D (435 aa).

Belongs to the complex I 49 kDa subunit family. As to quaternary structure, NDH-1 is composed of 14 different subunits. Subunits NuoB, C, D, E, F, and G constitute the peripheral sector of the complex.

It is found in the cell inner membrane. It carries out the reaction a quinone + NADH + 5 H(+)(in) = a quinol + NAD(+) + 4 H(+)(out). Its function is as follows. NDH-1 shuttles electrons from NADH, via FMN and iron-sulfur (Fe-S) centers, to quinones in the respiratory chain. The immediate electron acceptor for the enzyme in this species is believed to be ubiquinone. Couples the redox reaction to proton translocation (for every two electrons transferred, four hydrogen ions are translocated across the cytoplasmic membrane), and thus conserves the redox energy in a proton gradient. The chain is NADH-quinone oxidoreductase subunit D from Xanthomonas euvesicatoria pv. vesicatoria (strain 85-10) (Xanthomonas campestris pv. vesicatoria).